The sequence spans 202 residues: N-(5'-phosphoribosyl)anthranilate isomerase (202 aa).

This sequence belongs to the TrpF family.

The enzyme catalyses N-(5-phospho-beta-D-ribosyl)anthranilate = 1-(2-carboxyphenylamino)-1-deoxy-D-ribulose 5-phosphate. The protein operates within amino-acid biosynthesis; L-tryptophan biosynthesis; L-tryptophan from chorismate: step 3/5. In Listeria monocytogenes serovar 1/2a (strain ATCC BAA-679 / EGD-e), this protein is N-(5'-phosphoribosyl)anthranilate isomerase.